The following is a 291-amino-acid chain: ATP synthase gamma chain (291 aa).

Belongs to the ATPase gamma chain family. As to quaternary structure, F-type ATPases have 2 components, CF(1) - the catalytic core - and CF(0) - the membrane proton channel. CF(1) has five subunits: alpha(3), beta(3), gamma(1), delta(1), epsilon(1). CF(0) has three main subunits: a, b and c.

Its subcellular location is the cell inner membrane. Its function is as follows. Produces ATP from ADP in the presence of a proton gradient across the membrane. The gamma chain is believed to be important in regulating ATPase activity and the flow of protons through the CF(0) complex. The chain is ATP synthase gamma chain from Burkholderia ambifaria (strain MC40-6).